A 213-amino-acid chain; its full sequence is Ribonuclease HII (213 aa).

Positions 18–213 (GLHAGVDEVG…RPVKERLAKR (196 aa)) constitute an RNase H type-2 domain. 3 residues coordinate a divalent metal cation: aspartate 24, glutamate 25, and aspartate 116.

Belongs to the RNase HII family. The cofactor is Mn(2+). It depends on Mg(2+) as a cofactor.

The protein resides in the cytoplasm. It catalyses the reaction Endonucleolytic cleavage to 5'-phosphomonoester.. Endonuclease that specifically degrades the RNA of RNA-DNA hybrids. The sequence is that of Ribonuclease HII from Shewanella woodyi (strain ATCC 51908 / MS32).